The following is an 827-amino-acid chain: Villin-1 (827 aa).

The interval 1-126 (MTKLNAQVKG…IRKGGVASGM (126 aa)) is necessary for homodimerization. Residues 1 to 734 (MTKLNAQVKG…YEDLKAELGN (734 aa)) form a core region. The stretch at 28 to 107 (QMVPVSSSTY…EVQGNESEAF (80 aa)) is one Gelsolin-like 1 repeat. LPA/PIP2-binding site regions lie at residues 112–119 (KQGIVIRK) and 138–146 (RLLHVKGKR). 2 Gelsolin-like repeats span residues 148-216 (VVAG…GEDE) and 269-342 (EVAT…SAVF). Phosphoserine is present on serine 366. Gelsolin-like repeat units lie at residues 409-489 (DLVP…PHLM), 528-595 (TKAF…ANFW), and 634-707 (TEIP…PPTF). A Phosphoserine modification is found at serine 735. Residues 761–827 (SGPLPIFPLE…QNLKKEKGLF (67 aa)) enclose the HP domain. Residues 816-824 (KQQNLKKEK) form an LPA/PIP2-binding site 3 region.

Belongs to the villin/gelsolin family. In terms of assembly, monomer. Homodimer; homodimerization is necessary for actin-bundling. Associates with F-actin; phosphorylation at tyrosine residues decreases the association with F-actin. Interacts (phosphorylated at C-terminus tyrosine phosphorylation sites) with PLCG1 (via the SH2 domains). Interacts (phosphorylated form) with PLCG1; the interaction is enhanced by hepatocyte growth factor (HGF). Phosphorylated on tyrosine residues by SRC. The unphosphorylated form increases the initial rate of actin-nucleating activity, whereas the tyrosine-phosphorylated form inhibits actin-nucleating activity, enhances actin-bundling activity and enhances actin-severing activity by reducing high Ca(2+) requirements. The tyrosine-phosphorylated form does not regulate actin-capping activity. Tyrosine phosphorylation is essential for cell migration: tyrosine phosphorylation sites in the N-terminus half regulate actin reorganization and cell morphology, whereas tyrosine phosphorylation sites in the C-terminus half regulate cell migration. Tyrosine phosphorylation is induced by epidermal growth factor (EGF) and stimulates cell migration.

Its subcellular location is the cytoplasm. It is found in the cytoskeleton. The protein localises to the cell projection. It localises to the lamellipodium. The protein resides in the ruffle. Its subcellular location is the microvillus. It is found in the filopodium tip. The protein localises to the filopodium. Its function is as follows. Epithelial cell-specific Ca(2+)-regulated actin-modifying protein that modulates the reorganization of microvillar actin filaments. Plays a role in the actin nucleation, actin filament bundle assembly, actin filament capping and severing. Binds phosphatidylinositol 4,5-bisphosphate (PIP2) and lysophosphatidic acid (LPA); binds LPA with higher affinity than PIP2. Binding to LPA increases its phosphorylation by SRC and inhibits all actin-modifying activities. Binding to PIP2 inhibits actin-capping and -severing activities but enhances actin-bundling activity. Regulates the intestinal epithelial cell morphology, cell invasion, cell migration and apoptosis. Protects against apoptosis induced by dextran sodium sulfate (DSS) in the gastrointestinal epithelium. Appears to regulate cell death by maintaining mitochondrial integrity. Enhances hepatocyte growth factor (HGF)-induced epithelial cell motility, chemotaxis and wound repair. The sequence is that of Villin-1 (VIL1) from Sus scrofa (Pig).